Reading from the N-terminus, the 636-residue chain is Capsid vertex component 2 (636 aa).

The segment at 1 to 48 is interaction with major capsid protein/MCP; the sequence is MSLLHTFWRLPVAVFFEPHEENVLRCPERVLRRLLEDAAVAMRGGGWR. Residues 97 to 125 form a disordered region; sequence DEGPSPRTLLQPPCRPRSSSPGTGVAGAS.

It belongs to the herpesviridae CVC2 protein family. As to quaternary structure, heterodimerizes with CVC1. Interacts with major capsid protein/MCP and triplex capsid protein 1/TRX1 at the pentamer vertices. Interacts with the large tegument protein/LTP.

It is found in the virion. The protein resides in the host nucleus. Its function is as follows. Capsid vertex-specific component that plays a role during viral DNA encapsidation, assuring correct genome cleavage and presumably stabilizing capsids that contain full-length viral genomes. Participates in the interaction between the capsid and the tegument through interaction with the large tegument protein/LTP. The protein is Capsid vertex component 2 of Homo sapiens (Human).